We begin with the raw amino-acid sequence, 233 residues long: Preflagellin peptidase (233 aa).

A topological domain (cytoplasmic) is located at residue methionine 1. Residues 2–18 traverse the membrane as a helical segment; it reads IAYAIGLLGLLIASIQD. The Extracellular segment spans residues 19-23; sequence IKSRE. Residues 24–46 form a helical membrane-spanning segment; sequence IENYIWIGMAVIGLLLSTYLSFT. Residues 47 to 49 lie on the Cytoplasmic side of the membrane; it reads TGN. The helical transmembrane segment at 50–72 threads the bilayer; the sequence is FMPIISSISGFIICFIIGYLMFV. Over 73–78 the chain is Extracellular; that stretch reads LGIGGA. A helical membrane pass occupies residues 79–89; sequence DGKILMGMGAL. Residues 90-110 lie on the Cytoplasmic side of the membrane; that stretch reads IPSYAFPVYSSLQPLYTMEYI. The chain crosses the membrane as a helical span at residues 111-139; that stretch reads PWFPLLVFFNGVILMIVLPIYLFFKNLSN. Topologically, residues 140-207 are extracellular; the sequence is GVKPKKLKEY…QYVWATPELP (68 aa). Residues 208–219 traverse the membrane as a helical segment; sequence LLVPIALSYIIT. Residues 220 to 233 lie on the Cytoplasmic side of the membrane; that stretch reads PFLGDKILSIILPM.

This sequence belongs to the peptidase A24 family. Archaeal preflagellin peptidase subfamily.

The protein localises to the cell membrane. The enzyme catalyses Cleaves the signal peptide of 3 to 12 amino acids from the N-terminal of preflagellin, usually at Arg-Gly-|- or Lys-Gly-|-, to release flagellin.. Cleaves the N-terminal leader peptide from preflagellins. The processing of preflagellins is necessary for assembly of flagellins into a flagellum structure. The polypeptide is Preflagellin peptidase (flaK) (Methanococcus voltae).